The following is a 357-amino-acid chain: Peptide chain release factor 1 (357 aa).

At Q235 the chain carries N5-methylglutamine. Residues 282-294 show a composition bias toward basic and acidic residues; it reads RQKADTERSESRR. The segment at 282-308 is disordered; the sequence is RQKADTERSESRRSQVGSGDRSERIRT.

It belongs to the prokaryotic/mitochondrial release factor family. In terms of processing, methylated by PrmC. Methylation increases the termination efficiency of RF1.

The protein localises to the cytoplasm. Peptide chain release factor 1 directs the termination of translation in response to the peptide chain termination codons UAG and UAA. This Brucella anthropi (strain ATCC 49188 / DSM 6882 / CCUG 24695 / JCM 21032 / LMG 3331 / NBRC 15819 / NCTC 12168 / Alc 37) (Ochrobactrum anthropi) protein is Peptide chain release factor 1.